The chain runs to 251 residues: Bidirectional sugar transporter SWEET4 (251 aa).

Residues 1 to 12 (MVNATVARNIAG) are Extracellular-facing. N-linked (GlcNAc...) asparagine glycosylation is present at N3. One can recognise a MtN3/slv 1 domain in the interval 12–96 (GICGNVISLF…LAIFFFFSPT (85 aa)). A helical transmembrane segment spans residues 13 to 33 (ICGNVISLFLFLSPIPTFITI). Topologically, residues 34–45 (YKKKKVEEYKAD) are cytoplasmic. Residues 46 to 66 (PYLATVLNCALWVFYGLPMVQ) form a helical membrane-spanning segment. Topologically, residues 67–72 (PDSLLV) are extracellular. The chain crosses the membrane as a helical span at residues 73 to 93 (ITINGTGLAIELVYLAIFFFF). The Cytoplasmic portion of the chain corresponds to 94 to 103 (SPTSRKVKVG). The chain crosses the membrane as a helical span at residues 104 to 124 (LWLIGEMVFVGIVATCTLLLF). Over 125–132 (HTHNQRSS) the chain is Extracellular. A helical membrane pass occupies residues 133–153 (FVGIFCVIFVSLMYIAPLTIM). Residues 133 to 216 (FVGIFCVIFV…LILYACYYKT (84 aa)) enclose the MtN3/slv 2 domain. Topologically, residues 154–163 (SKVIKTKSVK) are cytoplasmic. Residues 164–186 (YMPFSLSLANFLNGVVWVIYALI) traverse the membrane as a helical segment. At 187-190 (KFDL) the chain is on the extracellular side. A helical membrane pass occupies residues 191–213 (FILIGNGLGTVSGAVQLILYACY). Topologically, residues 214–251 (YKTTPKDDEDEEDEENLSKVNSQLQLSGNSGQAKRVSA) are cytoplasmic. Positions 220–251 (DDEDEEDEENLSKVNSQLQLSGNSGQAKRVSA) are disordered. A compositionally biased stretch (polar residues) spans 231-245 (SKVNSQLQLSGNSGQ).

It belongs to the SWEET sugar transporter family. In terms of assembly, forms homooligomers and heterooligomers with SWEET8 and SWEET17.

The protein resides in the cell membrane. Mediates both low-affinity uptake and efflux of sugar across the plasma membrane. The protein is Bidirectional sugar transporter SWEET4 of Arabidopsis thaliana (Mouse-ear cress).